Reading from the N-terminus, the 554-residue chain is CTP synthase (554 aa).

The amidoligase domain stretch occupies residues 1 to 265 (MTPLIFVTGG…DEIVVNQLKL (265 aa)). Ser-13 provides a ligand contact to CTP. A UTP-binding site is contributed by Ser-13. ATP is bound at residue 14-19 (SLGKGI). Mg(2+)-binding residues include Asp-71 and Glu-139. CTP contacts are provided by residues 146-148 (DIE), 186-191 (KTKPTQ), and Lys-222. Residues 186–191 (KTKPTQ) and Lys-222 contribute to the UTP site. Positions 292 to 545 (TIAVVGKYVD…IRAARERKAG (254 aa)) constitute a Glutamine amidotransferase type-1 domain. Gly-353 is an L-glutamine binding site. The active-site Nucleophile; for glutamine hydrolysis is Cys-380. Residues 381 to 384 (YGMQ), Glu-404, and Arg-471 contribute to the L-glutamine site. Catalysis depends on residues His-518 and Glu-520.

Belongs to the CTP synthase family. Homotetramer.

It carries out the reaction UTP + L-glutamine + ATP + H2O = CTP + L-glutamate + ADP + phosphate + 2 H(+). It catalyses the reaction L-glutamine + H2O = L-glutamate + NH4(+). The catalysed reaction is UTP + NH4(+) + ATP = CTP + ADP + phosphate + 2 H(+). Its pathway is pyrimidine metabolism; CTP biosynthesis via de novo pathway; CTP from UDP: step 2/2. Allosterically activated by GTP, when glutamine is the substrate; GTP has no effect on the reaction when ammonia is the substrate. The allosteric effector GTP functions by stabilizing the protein conformation that binds the tetrahedral intermediate(s) formed during glutamine hydrolysis. Inhibited by the product CTP, via allosteric rather than competitive inhibition. Its function is as follows. Catalyzes the ATP-dependent amination of UTP to CTP with either L-glutamine or ammonia as the source of nitrogen. Regulates intracellular CTP levels through interactions with the four ribonucleotide triphosphates. This chain is CTP synthase, found in Stenotrophomonas maltophilia (strain K279a).